Reading from the N-terminus, the 963-residue chain is Ras-interacting protein 1 (963 aa).

Residues 1–10 are compositionally biased toward basic and acidic residues; that stretch reads MLSGERKEGG. Disordered regions lie at residues 1–22 and 35–118; these read MLSG…LPVG and LGRR…AQRW. Low complexity predominate over residues 41–57; it reads SAASVKSSSSDTGSRSS. Residue Arg94 is modified to Omega-N-methylarginine. Residues 96–113 show a composition bias toward gly residues; that stretch reads SGTGTTGSSGAGGPGTPG. Positions 144-259 constitute a Ras-associating domain; it reads PPGVLKIFGA…RRFELRGREE (116 aa). Phosphoserine occurs at positions 188, 280, and 292. The disordered stretch occupies residues 267–356; the sequence is AFGAADSEGT…LSMAPGAADA (90 aa). Residues 290–301 show a composition bias toward low complexity; it reads AASGGAALASPG. Positions 302–313 are enriched in gly residues; sequence PGTGSGAPAGSG. The segment covering 320–333 has biased composition (low complexity); sequence NLSLRRSVSELSLQ. Phosphoserine occurs at positions 326, 328, 331, and 419. One can recognise a Dilute domain in the interval 600–897; sequence GRLARLIKEA…PPAEREAVDT (298 aa).

In terms of assembly, interacts with Ras family members that have been activated by GTP binding. Interacts with HRAS, RAP1A, RAP2, RRAS, RAF1 and RRAS2. Interacts with MYH9 and ARHGAP29. In terms of tissue distribution, highly expressed in heart. Detected at lower levels in placenta and pancreas.

The protein localises to the cytoplasm. The protein resides in the perinuclear region. Its subcellular location is the golgi apparatus. It localises to the golgi stack. In terms of biological role, required for the proper formation of vascular structures that develop via both vasculogenesis and angiogenesis. Acts as a critical and vascular-specific regulator of GTPase signaling, cell architecture, and adhesion, which is essential for endothelial cell morphogenesis and blood vessel tubulogenesis. Regulates the activity of Rho GTPases in part by recruiting ARHGAP29 and suppressing RhoA signaling and dampening ROCK and MYH9 activities in endothelial cells. May act as effector for Golgi-bound HRAS and other Ras-like proteins. May promote HRAS-mediated transformation. Negative regulator of amino acid starvation-induced autophagy. The sequence is that of Ras-interacting protein 1 (RASIP1) from Homo sapiens (Human).